The following is a 212-amino-acid chain: MPIREIRHPLIRHKLGLMRRADISTKNFRELAQEVGALLTYEATADLTLESYDIQGWAGTVSVEKIAGKKITVVPILRAGIGMLDGVLSLIPGAKVSAVGVARNEETLQAHTYLEKLVPEIDERLAMIIDPMLATGSSMVATIDLLKKAGCKEIRAMVLVAAPEGIAAVERAHPDVMIYTASIDERLNEHGYIIPGLGDAGDKIFGTKQKDA.

5-phospho-alpha-D-ribose 1-diphosphate is bound by residues Arg-78, Arg-103, and 130 to 138 (DPMLATGSS). Uracil contacts are provided by residues Ile-193 and 198–200 (GDA). Asp-199 serves as a coordination point for 5-phospho-alpha-D-ribose 1-diphosphate.

This sequence belongs to the UPRTase family. It depends on Mg(2+) as a cofactor.

It catalyses the reaction UMP + diphosphate = 5-phospho-alpha-D-ribose 1-diphosphate + uracil. It functions in the pathway pyrimidine metabolism; UMP biosynthesis via salvage pathway; UMP from uracil: step 1/1. Its activity is regulated as follows. Allosterically activated by GTP. In terms of biological role, catalyzes the conversion of uracil and 5-phospho-alpha-D-ribose 1-diphosphate (PRPP) to UMP and diphosphate. The protein is Uracil phosphoribosyltransferase of Pseudomonas syringae pv. tomato (strain ATCC BAA-871 / DC3000).